The sequence spans 109 residues: Nucleoid-associated protein YbaB (109 aa).

It belongs to the YbaB/EbfC family. In terms of assembly, homodimer.

The protein resides in the cytoplasm. It is found in the nucleoid. Its function is as follows. Binds to DNA and alters its conformation. May be involved in regulation of gene expression, nucleoid organization and DNA protection. The protein is Nucleoid-associated protein YbaB of Escherichia coli O127:H6 (strain E2348/69 / EPEC).